Consider the following 551-residue polypeptide: Hydroxymethylpyrimidine/phosphomethylpyrimidine kinase THI21 (551 aa).

Gln64 contacts 4-amino-5-hydroxymethyl-2-methylpyrimidine.

The protein in the N-terminal section; belongs to the ThiD family. This sequence in the C-terminal section; belongs to the thiaminase-2 family.

It carries out the reaction 4-amino-5-hydroxymethyl-2-methylpyrimidine + ATP = 4-amino-2-methyl-5-(phosphooxymethyl)pyrimidine + ADP + H(+). It catalyses the reaction 4-amino-2-methyl-5-(phosphooxymethyl)pyrimidine + ATP = 4-amino-2-methyl-5-(diphosphooxymethyl)pyrimidine + ADP. It functions in the pathway cofactor biosynthesis; thiamine diphosphate biosynthesis; 4-amino-2-methyl-5-diphosphomethylpyrimidine from 5-amino-1-(5-phospho-D-ribosyl)imidazole: step 2/3. Its pathway is cofactor biosynthesis; thiamine diphosphate biosynthesis; 4-amino-2-methyl-5-diphosphomethylpyrimidine from 5-amino-1-(5-phospho-D-ribosyl)imidazole: step 3/3. Functionally, catalyzes the phosphorylation of hydroxymethylpyrimidine phosphate (HMP-P) to HMP-PP, and also probably that of HMP to HMP-P. This is Hydroxymethylpyrimidine/phosphomethylpyrimidine kinase THI21 (THI21) from Saccharomyces cerevisiae (strain ATCC 204508 / S288c) (Baker's yeast).